The following is a 278-amino-acid chain: 4-deoxy-L-threo-5-hexosulose-uronate ketol-isomerase (278 aa).

Positions 196, 198, 203, and 245 each coordinate Zn(2+).

Belongs to the KduI family. Zn(2+) serves as cofactor.

It catalyses the reaction 5-dehydro-4-deoxy-D-glucuronate = 3-deoxy-D-glycero-2,5-hexodiulosonate. It participates in glycan metabolism; pectin degradation; 2-dehydro-3-deoxy-D-gluconate from pectin: step 4/5. Functionally, catalyzes the isomerization of 5-dehydro-4-deoxy-D-glucuronate to 3-deoxy-D-glycero-2,5-hexodiulosonate. This Shigella flexneri protein is 4-deoxy-L-threo-5-hexosulose-uronate ketol-isomerase.